The primary structure comprises 276 residues: Energy-coupling factor transporter ATP-binding protein EcfA1 (276 aa).

The region spanning 2–237 (IEIKNLKFKY…GSELVDLGLD (236 aa)) is the ABC transporter domain. An ATP-binding site is contributed by 37-44 (GHNGSGKS).

This sequence belongs to the ABC transporter superfamily. Energy-coupling factor EcfA family. Forms a stable energy-coupling factor (ECF) transporter complex composed of 2 membrane-embedded substrate-binding proteins (S component), 2 ATP-binding proteins (A component) and 2 transmembrane proteins (T component).

The protein localises to the cell membrane. In terms of biological role, ATP-binding (A) component of a common energy-coupling factor (ECF) ABC-transporter complex. Unlike classic ABC transporters this ECF transporter provides the energy necessary to transport a number of different substrates. The chain is Energy-coupling factor transporter ATP-binding protein EcfA1 from Streptococcus thermophilus (strain CNRZ 1066).